The primary structure comprises 469 residues: MCAKQQQTLLPTRAAHGRLHRNRDAVAWPFSTLCRVSGPTLFQMTFTAALWVAVFGKCGPPPAIPNALPASDVNRTDFESHTTLKYECLPGYGRGISRMMVYCKPSGEWEISVSCAKKHCRNPGYLDNGYVNGETITFGSQIEFSCQEGFILVGSSTSSCEVRGKGVAWSNPFPECVIVKCGPPPDISNGKHSGTEDFYPYNHGISYTCDPGFRLVGSPFIGCTVVNKTVPVWSSSPPTCEKIICSQPNILHGVIVSGYKATYTHRDSVRLACLNGTVLRGRHVIECQGNGNWSSLPTCEFDCDLPPAIVNGYYTSMVYSKITLVTYECDKGYRLVGKAIISCSFSKWKGTAPQCKALCQKPEVGNGTLSDEKDQYVESENVTIQCDSGFAMLGSQSISCSESGTWYPEVPRCEQEASEDLKPALTGNKTMQYVPNSHDVKMALEIYKLTLEVELLQLQIQKEKHTEAH.

The N-terminal stretch at 1–56 is a signal peptide; that stretch reads MCAKQQQTLLPTRAAHGRLHRNRDAVAWPFSTLCRVSGPTLFQMTFTAALWVAVFG. Sushi domains are found at residues 57–117, 118–178, 179–242, 243–301, 302–357, and 358–415; these read KCGP…SCAK, KHCR…ECVI, VKCG…TCEK, IICS…TCEF, DCDL…QCKA, and LCQK…RCEQ. 12 disulfide bridges follow: Cys58-Cys103, Cys88-Cys115, Cys120-Cys160, Cys146-Cys176, Cys181-Cys223, Cys209-Cys240, Cys245-Cys287, Cys273-Cys299, Cys303-Cys343, Cys329-Cys355, Cys359-Cys400, and Cys386-Cys413. Residue Asn74 is glycosylated (N-linked (GlcNAc...) asparagine). N-linked (GlcNAc...) asparagine glycosylation is found at Asn227, Asn275, and Asn292. Asn366 and Asn381 each carry an N-linked (GlcNAc...) asparagine glycan. Asn428 carries an N-linked (GlcNAc...) asparagine glycan.

Homoheptamer; not covalently linked. Mouse lacks the beta chain of C4BP.

It is found in the secreted. Its function is as follows. Controls the classical pathway of complement activation. It binds as a cofactor to C3b/C4b inactivator (C3bINA), which then hydrolyzes the complement fragment C4b. It also accelerates the degradation of the C4bC2a complex (C3 convertase) by dissociating the complement fragment C2a. Alpha chain binds C4b. It also interacts with serum amyloid P component. The protein is C4b-binding protein (C4bpa) of Mus musculus (Mouse).